Here is a 68-residue protein sequence, read N- to C-terminus: Molybdenum-pterin-binding protein 2 (68 aa).

Positions 2–68 (SISARNQLKG…VKSTDVMILA (67 aa)) constitute a Mop domain.

In terms of biological role, binds one mole of molybdenum per mole of protein and contains a pterin. In Clostridium pasteurianum, this protein is Molybdenum-pterin-binding protein 2 (mopII).